We begin with the raw amino-acid sequence, 246 residues long: Type III pantothenate kinase (246 aa).

An ATP-binding site is contributed by 6 to 13; the sequence is DVGNSRIK. Substrate is bound by residues tyrosine 93 and 100-103; that span reads GSDR. Aspartate 102 acts as the Proton acceptor in catalysis. An ATP-binding site is contributed by threonine 125. Residue threonine 175 participates in substrate binding.

It belongs to the type III pantothenate kinase family. Homodimer. NH4(+) serves as cofactor. The cofactor is K(+).

It is found in the cytoplasm. It catalyses the reaction (R)-pantothenate + ATP = (R)-4'-phosphopantothenate + ADP + H(+). It functions in the pathway cofactor biosynthesis; coenzyme A biosynthesis; CoA from (R)-pantothenate: step 1/5. Catalyzes the phosphorylation of pantothenate (Pan), the first step in CoA biosynthesis. In Dichelobacter nodosus (strain VCS1703A), this protein is Type III pantothenate kinase.